The following is a 187-amino-acid chain: UPF0301 protein Clim_0777 (187 aa).

The protein belongs to the UPF0301 (AlgH) family.

This is UPF0301 protein Clim_0777 from Chlorobium limicola (strain DSM 245 / NBRC 103803 / 6330).